Here is a 258-residue protein sequence, read N- to C-terminus: NAD(P)H-hydrate epimerase (258 aa).

A YjeF N-terminal domain is found at 15–244 (AFQLDQELMS…RIAKEYGIED (230 aa)). 75–79 (NNGGD) is a (6S)-NADPHX binding site. Positions 76 and 145 each coordinate K(+). Residues 149 to 155 (GFSFKPP) and aspartate 181 contribute to the (6S)-NADPHX site. Serine 184 contacts K(+).

Belongs to the NnrE/AIBP family. It depends on K(+) as a cofactor.

The protein resides in the cytoplasm. Its subcellular location is the mitochondrion. The enzyme catalyses (6R)-NADHX = (6S)-NADHX. The catalysed reaction is (6R)-NADPHX = (6S)-NADPHX. Catalyzes the epimerization of the S- and R-forms of NAD(P)HX, a damaged form of NAD(P)H that is a result of enzymatic or heat-dependent hydration. This is a prerequisite for the S-specific NAD(P)H-hydrate dehydratase to allow the repair of both epimers of NAD(P)HX. This Candida albicans (strain SC5314 / ATCC MYA-2876) (Yeast) protein is NAD(P)H-hydrate epimerase.